We begin with the raw amino-acid sequence, 282 residues long: Trihydroxynaphthalene reductase PfmaI (282 aa).

The NADP(+) site is built by Ile41, Asn114, and Arg147. Residues Ser164 and Tyr178 each act as proton donor in the active site. NADP(+)-binding residues include Tyr178, Lys182, Ile211, and Thr213. Catalysis depends on Lys182, which acts as the Lowers pKa of active site Tyr.

This sequence belongs to the short-chain dehydrogenases/reductases (SDR) family.

It functions in the pathway pigment biosynthesis; melanin biosynthesis. In terms of biological role, trihydroxynaphthalene reductase involved the biosynthesis of dihydroxynaphthalene (DHN)-melanin, a bluish-green pigment forming a dark layer in the conidial wall that protects the conidia from UV radiations. The first step of the pathway is the production of the pentaketide 1,3,6,8-tetrahydroxynaphthalene (1,3,6,8-THN or T4HN) by the polyketide synthase PfmaE though condensation of acetyl-CoA with malonyl-CoA. T4HN is not stable and easily oxidizes into the stable form flaviolin. T4HN is also substrate of the hydroxynaphthalene reductase PfmaG to yield scytalone. The scytalone dehydratase PfmaJ then reduces scytalone to 1,3,8-THN. 1,3,8-THN is then substrate of the hydroxynaphthalene reductase PfmaI to yield vermelone. Vermelone is further converted by the multicopper oxidase PfmaD to 1,8-DHN. Finally the laccase PFICI_06862 transforms 1,8-DHN to DHN-melanin. The roles of the 5-oxoprolinase PfmaA and the proline iminopeptidase PfmaB within the cluster have not been elucidated yet. The polypeptide is Trihydroxynaphthalene reductase PfmaI (Pestalotiopsis fici (strain W106-1 / CGMCC3.15140)).